A 318-amino-acid polypeptide reads, in one-letter code: UDP-N-acetylenolpyruvoylglucosamine reductase (318 aa).

The 167-residue stretch at 38-204 (IGGICPVVVE…LGIEILLKEG (167 aa)) folds into the FAD-binding PCMH-type domain. The active site involves Arg-182. Positions 212–232 (SLKDKRDRRNSSQPENKKSAG) are disordered. Positions 213–229 (LKDKRDRRNSSQPENKK) are enriched in basic and acidic residues. Ser-233 (proton donor) is an active-site residue. Glu-310 is a catalytic residue.

It belongs to the MurB family. Requires FAD as cofactor.

The protein resides in the cytoplasm. The catalysed reaction is UDP-N-acetyl-alpha-D-muramate + NADP(+) = UDP-N-acetyl-3-O-(1-carboxyvinyl)-alpha-D-glucosamine + NADPH + H(+). The protein operates within cell wall biogenesis; peptidoglycan biosynthesis. Cell wall formation. The protein is UDP-N-acetylenolpyruvoylglucosamine reductase of Leptospira borgpetersenii serovar Hardjo-bovis (strain JB197).